Here is a 216-residue protein sequence, read N- to C-terminus: Endo-1,4-beta-xylanase 2 (216 aa).

Positions 1-27 (MVSFSSLFVAACAAVTAFALPNELEKR) are cleaved as a signal peptide. The GH11 domain occupies 28–216 (AITSNEQGTN…SSGSASITVS (189 aa)). The N-linked (GlcNAc...) asparagine glycan is linked to N87. The active-site Nucleophile is E112. The active-site Proton donor is E203.

It belongs to the glycosyl hydrolase 11 (cellulase G) family.

The protein localises to the secreted. It carries out the reaction Endohydrolysis of (1-&gt;4)-beta-D-xylosidic linkages in xylans.. Its pathway is glycan degradation; xylan degradation. In terms of biological role, endo-1,4-beta-xylanase involved in the hydrolysis of xylan, a major structural heterogeneous polysaccharide found in plant biomass representing the second most abundant polysaccharide in the biosphere, after cellulose. In Rhizopus oryzae (Mucormycosis agent), this protein is Endo-1,4-beta-xylanase 2 (xyn2).